A 592-amino-acid polypeptide reads, in one-letter code: Bifunctional enzyme BirA/CoaX (592 aa).

The tract at residues 1–329 (MTVLKPSHWR…ISLRPDNRSV (329 aa)) is biotin--protein ligase. The BPL/LPL catalytic domain maps to 83–259 (QTALKHECAS…ELGAVLEQYA (177 aa)). The type III pantothenate kinase stretch occupies residues 336-592 (DSERFLLLEG…AAEGGESEHA (257 aa)). 344-351 (EGGNSRLK) contributes to the ATP binding site. Substrate-binding positions include Y426 and 433–436 (GSDR). D435 acts as the Proton acceptor in catalysis. An ATP-binding site is contributed by T458. T508 contacts substrate.

The protein in the N-terminal section; belongs to the biotin--protein ligase family. It in the C-terminal section; belongs to the type III pantothenate kinase family. It depends on NH4(+) as a cofactor. Requires K(+) as cofactor.

The protein localises to the cytoplasm. It carries out the reaction biotin + L-lysyl-[protein] + ATP = N(6)-biotinyl-L-lysyl-[protein] + AMP + diphosphate + H(+). The enzyme catalyses (R)-pantothenate + ATP = (R)-4'-phosphopantothenate + ADP + H(+). It functions in the pathway cofactor biosynthesis; coenzyme A biosynthesis; CoA from (R)-pantothenate: step 1/5. Its function is as follows. Activates biotin to form biotinyl-5'-adenylate and transfers the biotin moiety to biotin-accepting proteins. In terms of biological role, catalyzes the phosphorylation of pantothenate (Pan), the first step in CoA biosynthesis. In Neisseria gonorrhoeae (strain ATCC 700825 / FA 1090), this protein is Bifunctional enzyme BirA/CoaX (birA/coaX).